Here is a 1220-residue protein sequence, read N- to C-terminus: Eukaryotic translation initiation factor 5B (1220 aa).

Disordered regions lie at residues 1–417 (MGKK…EARA) and 430–608 (GVEV…AYDK). Residues 7–16 (NKSEDSTKDD) are compositionally biased toward basic and acidic residues. The span at 20 to 32 (DALAAEIEGAGAA) shows a compositional bias: low complexity. The residue at position 66 (S66) is a Phosphoserine. Residues 95 to 105 (DKKKKGQKGKK) show a composition bias toward basic residues. S107 and S113 each carry phosphoserine. Acidic residues predominate over residues 109-118 (DDNDSEELED). The residue at position 134 (Y134) is a Phosphotyrosine. Phosphoserine is present on residues S135 and S137. Over residues 146-158 (LPKKAKGKAQKSN) the composition is skewed to basic residues. A phosphoserine mark is found at S164, S171, S182, S183, S186, S190, S214, and S222. Residues 170-179 (NSKKIKERSR) are compositionally biased toward basic and acidic residues. Basic and acidic residues predominate over residues 231–282 (KKAEKKERERKKRDEEKAKLRKLKEKEELETGKKDQSKQKESQRKFEEETVK). At T301 the chain carries Phosphothreonine. Basic and acidic residues-rich tracts occupy residues 323 to 334 (GEKEEKEKEKKK), 349 to 417 (AKLK…EARA), and 434 to 449 (PSKD…YEDK). S438 is modified (phosphoserine). Acidic residues predominate over residues 491–516 (EPEEEEDTEDAGLDDWEAMASDEETE). T498 is modified (phosphothreonine). Residues 517-530 (KVEGNKVHIEVKEN) are compositionally biased toward basic and acidic residues. Residues 531–569 (PEEEEEEEEEEEEDEESEEEEEEEGESEGSEGDEEDEKV) are compositionally biased toward acidic residues. A phosphoserine mark is found at S547, S557, S560, S588, S589, S591, and S595. Residues 570 to 588 (SDEKDSGKTLDKKPSKEMS) show a composition bias toward basic and acidic residues. Residues 598–608 (DRTKEERAYDK) are compositionally biased toward basic and acidic residues. Residues 629–846 (LRAPIICVLG…LLVELTQTML (218 aa)) enclose the tr-type G domain. The interval 638 to 645 (GHVDTGKT) is G1. GTP-binding positions include 640–646 (VDTGKTK) and 663–665 (GIT). A G2 region spans residues 663-667 (GITQQ). The interval 702-705 (DTPG) is G3. Residue H706 is part of the active site. Residues 756 to 757 (NK), 759 to 760 (DR), and 825 to 826 (AH) each bind GTP. Positions 756-759 (NKID) are G4. A G5 region spans residues 824–826 (SAH). Residue S1168 is modified to Phosphoserine.

Belongs to the TRAFAC class translation factor GTPase superfamily. Classic translation factor GTPase family. IF-2 subfamily. Interacts through its C-terminal domain (CTD) with the CTD of eIF1A (EIF1AX) or with the CTD of EIF5 (mutually exclusive) through a common binding site. Interacts with eIF1A (EIF1AX) from the location of the start codon by the 43S complex until the formation of the 80S complex. Interacts with ANXA5 in a calcium and phospholipid-dependent manner. It depends on a monovalent cation as a cofactor. Post-translationally, (Microbial infection) Cleaved and inactivated by the protease 3C of poliovirus, Coxsackievirus B3 and Human rhinovirus 14, allowing the virus to shutoff the host cell translation.

Its subcellular location is the cytoplasm. The catalysed reaction is GTP + H2O = GDP + phosphate + H(+). Plays a role in translation initiation. Ribosome-dependent GTPase that promotes the joining of the 60S ribosomal subunit to the pre-initiation complex to form the 80S initiation complex with the initiator methionine-tRNA in the P-site base paired to the start codon. Together with eIF1A (EIF1AX), actively orients the initiator methionine-tRNA in a conformation that allows 60S ribosomal subunit joining to form the 80S initiation complex. Is released after formation of the 80S initiation complex. Its GTPase activity is not essential for ribosomal subunits joining, but GTP hydrolysis is needed for eIF1A (EIF1AX) ejection quickly followed by EIF5B release to form elongation-competent ribosomes. In contrast to its procaryotic homolog, does not promote recruitment of Met-rRNA to the small ribosomal subunit. This Homo sapiens (Human) protein is Eukaryotic translation initiation factor 5B (EIF5B).